Here is a 215-residue protein sequence, read N- to C-terminus: Adenylate kinase (215 aa).

Residue 10–15 (GAGKGT) participates in ATP binding. The interval 30–59 (STGDILRANVRDGTKLGKEAKGYMDKGELV) is NMP. Residues T31, R36, 57–59 (ELV), 85–88 (GYPR), and Q92 contribute to the AMP site. The interval 126–162 (GRYVCTCGESYHMKFNPPKKENVCDACGADLYQRDDD) is LID. ATP is bound at residue R127. C130 and C132 together coordinate Zn(2+). Residue 135-136 (SY) coordinates ATP. Zn(2+) is bound by residues C149 and C152. R159 and R170 together coordinate AMP. G198 serves as a coordination point for ATP.

This sequence belongs to the adenylate kinase family. Monomer.

The protein localises to the cytoplasm. The catalysed reaction is AMP + ATP = 2 ADP. It functions in the pathway purine metabolism; AMP biosynthesis via salvage pathway; AMP from ADP: step 1/1. Functionally, catalyzes the reversible transfer of the terminal phosphate group between ATP and AMP. Plays an important role in cellular energy homeostasis and in adenine nucleotide metabolism. The sequence is that of Adenylate kinase from Methanococcoides burtonii (strain DSM 6242 / NBRC 107633 / OCM 468 / ACE-M).